We begin with the raw amino-acid sequence, 180 residues long: UPF0227 protein YcfP (180 aa).

It belongs to the UPF0227 family.

The chain is UPF0227 protein YcfP from Salmonella agona (strain SL483).